Reading from the N-terminus, the 202-residue chain is ATP-dependent Clp protease proteolytic subunit 1 (202 aa).

The active-site Nucleophile is serine 101. Residue histidine 126 is part of the active site.

This sequence belongs to the peptidase S14 family. Fourteen ClpP subunits assemble into 2 heptameric rings which stack back to back to give a disk-like structure with a central cavity, resembling the structure of eukaryotic proteasomes.

It localises to the cytoplasm. The catalysed reaction is Hydrolysis of proteins to small peptides in the presence of ATP and magnesium. alpha-casein is the usual test substrate. In the absence of ATP, only oligopeptides shorter than five residues are hydrolyzed (such as succinyl-Leu-Tyr-|-NHMec, and Leu-Tyr-Leu-|-Tyr-Trp, in which cleavage of the -Tyr-|-Leu- and -Tyr-|-Trp bonds also occurs).. In terms of biological role, cleaves peptides in various proteins in a process that requires ATP hydrolysis. Has a chymotrypsin-like activity. Plays a major role in the degradation of misfolded proteins. The sequence is that of ATP-dependent Clp protease proteolytic subunit 1 from Rhizobium etli (strain ATCC 51251 / DSM 11541 / JCM 21823 / NBRC 15573 / CFN 42).